The following is a 356-amino-acid chain: Dihydroorotate dehydrogenase (quinone) (356 aa).

Residues 66–70 and T90 contribute to the FMN site; that span reads AGFDK. K70 lines the substrate pocket. 115–119 lines the substrate pocket; the sequence is NRMGF. FMN-binding residues include N143 and N176. Position 176 (N176) interacts with substrate. Catalysis depends on S179, which acts as the Nucleophile. A substrate-binding site is contributed by N181. Residues K212 and T240 each contribute to the FMN site. 241-242 serves as a coordination point for substrate; the sequence is NT. FMN is bound by residues G266, G295, and 316–317; that span reads YT.

Belongs to the dihydroorotate dehydrogenase family. Type 2 subfamily. As to quaternary structure, monomer. It depends on FMN as a cofactor.

It is found in the cell membrane. The enzyme catalyses (S)-dihydroorotate + a quinone = orotate + a quinol. The protein operates within pyrimidine metabolism; UMP biosynthesis via de novo pathway; orotate from (S)-dihydroorotate (quinone route): step 1/1. In terms of biological role, catalyzes the conversion of dihydroorotate to orotate with quinone as electron acceptor. In Rhodococcus erythropolis (strain PR4 / NBRC 100887), this protein is Dihydroorotate dehydrogenase (quinone).